The primary structure comprises 655 residues: Katanin p80 WD40 repeat-containing subunit B1 (655 aa).

WD repeat units follow at residues 18 to 58 (AHGS…CIMS), 61 to 100 (GHTTPVESVRFNNAEELIVAGSQSGSLRVWDLEAAKILRT), 103 to 142 (GHKANVCSLDFHPYGDFVASGSLDTNIKLWDVRRKGCVFR), 145 to 184 (GHTQAVRCLRFSPDGKWLASASDDHSVKLWDLTAGKMMAE), 187 to 226 (EHKGPVNIIEFHPNEYLLASGSADRTVRFWDLEKFQLIGC), and 229 to 269 (GETI…DTVP). The disordered stretch occupies residues 316–453 (VPAEMPISQP…PVPAPQSKPP (138 aa)). The segment covering 358–374 (KESRAEIQNPEDYKEIF) has biased composition (basic and acidic residues). Over residues 415 to 426 (PATSNKNNTEQL) the composition is skewed to polar residues.

It belongs to the WD repeat KATNB1 family. Interacts with katna1. This interaction enhances the microtubule binding and severing activity of katna1 and also targets this activity to the centrosome.

The protein localises to the cytoplasm. It is found in the cytoskeleton. It localises to the microtubule organizing center. The protein resides in the centrosome. Its subcellular location is the spindle pole. The protein localises to the spindle. Participates in a complex which severs microtubules in an ATP-dependent manner. May act to target the enzymatic subunit of this complex to sites of action such as the centrosome. Microtubule severing may promote rapid reorganization of cellular microtubule arrays and the release of microtubules from the centrosome following nucleation. The protein is Katanin p80 WD40 repeat-containing subunit B1 (katnb1) of Xenopus tropicalis (Western clawed frog).